Consider the following 403-residue polypeptide: Imidazolonepropionase (403 aa).

Positions 74 and 76 each coordinate Fe(3+). Residues H74 and H76 each contribute to the Zn(2+) site. 3 residues coordinate 4-imidazolone-5-propanoate: R83, Y146, and H179. Y146 serves as a coordination point for N-formimidoyl-L-glutamate. Fe(3+) is bound at residue H242. Position 242 (H242) interacts with Zn(2+). A 4-imidazolone-5-propanoate-binding site is contributed by Q245. Residue D317 coordinates Fe(3+). D317 is a binding site for Zn(2+). Positions 319 and 321 each coordinate N-formimidoyl-L-glutamate. A 4-imidazolone-5-propanoate-binding site is contributed by T322.

It belongs to the metallo-dependent hydrolases superfamily. HutI family. It depends on Zn(2+) as a cofactor. The cofactor is Fe(3+).

The protein resides in the cytoplasm. It carries out the reaction 4-imidazolone-5-propanoate + H2O = N-formimidoyl-L-glutamate. The protein operates within amino-acid degradation; L-histidine degradation into L-glutamate; N-formimidoyl-L-glutamate from L-histidine: step 3/3. In terms of biological role, catalyzes the hydrolytic cleavage of the carbon-nitrogen bond in imidazolone-5-propanoate to yield N-formimidoyl-L-glutamate. It is the third step in the universal histidine degradation pathway. The chain is Imidazolonepropionase from Sphingopyxis alaskensis (strain DSM 13593 / LMG 18877 / RB2256) (Sphingomonas alaskensis).